Reading from the N-terminus, the 406-residue chain is 2,3-bisphosphoglycerate-independent phosphoglycerate mutase (406 aa).

The protein belongs to the BPG-independent phosphoglycerate mutase family. A-PGAM subfamily.

It catalyses the reaction (2R)-2-phosphoglycerate = (2R)-3-phosphoglycerate. The protein operates within carbohydrate degradation; glycolysis; pyruvate from D-glyceraldehyde 3-phosphate: step 3/5. Functionally, catalyzes the interconversion of 2-phosphoglycerate and 3-phosphoglycerate. This Methanococcus maripaludis (strain DSM 14266 / JCM 13030 / NBRC 101832 / S2 / LL) protein is 2,3-bisphosphoglycerate-independent phosphoglycerate mutase.